A 247-amino-acid chain; its full sequence is 14-3-3 protein gamma (247 aa).

Met-1 is subject to N-acetylmethionine. Val-2 carries the N-acetylvaline; in 14-3-3 protein gamma, N-terminally processed modification. The tract at residues 2–247 (VDREQLVQKA…QDDDGGEGNN (246 aa)) is interaction with SPATA18/MIEAP. Ser-71 carries the post-translational modification Phosphoserine. The residue at position 133 (Tyr-133) is a Phosphotyrosine. Thr-145 carries the phosphothreonine modification. Ser-215 is modified (phosphoserine). Residue Thr-234 is modified to Phosphothreonine. Ser-235 is subject to Phosphoserine.

It belongs to the 14-3-3 family. In terms of assembly, homodimer. Part of a complex that contains DSG3, PKP1, YAP1 and YWHAG; the complex is required for localization of DSG3 and YAP1 to the cell membrane in keratinocytes. Interacts with SAMSN1. Interacts with RAF1, SSH1 and CRTC2/TORC2. Interacts with ABL1 (phosphorylated form); the interaction retains it in the cytoplasm. Interacts with GAB2. Interacts with MDM4 (phosphorylated); negatively regulates MDM4 activity toward TP53. Interacts with PKA-phosphorylated AANAT and SIRT2. Interacts with the 'Thr-369' phosphorylated form of DAPK2. Interacts with PI4KB, TBC1D22A and TBC1D22B. Interacts with SLITRK1. Interacts with LRRK2; this interaction is dependent on LRRK2 phosphorylation. Interacts with MARK2 and MARK3. Interacts with MEFV. Interacts with ENDOG, TSC2 and PIK3C3; interaction with ENDOG weakens its interaction with TSC2 and PIK3C3. Interacts with (phosphorylated) WDR24. Interacts with BEST1; this interaction promotes L-glutamate channel activity leading to the positive regulation of NMDA glutamate receptor activity through the L-glutamate secretion. Interacts with PKP1 (when phosphorylated); the interaction results in translocation of PKP1 to the cytoplasm and loss of intercellular adhesion in keratinocytes. Interacts with SPATA18/MIEAP; a protein that also plays a role in MALM. Phosphorylated by various PKC isozymes.

The protein localises to the cytoplasm. Its subcellular location is the cytosol. It localises to the mitochondrion matrix. Its function is as follows. Adapter protein implicated in the regulation of a large spectrum of both general and specialized signaling pathways. Binds to a large number of partners, usually by recognition of a phosphoserine or phosphothreonine motif. Binding generally results in the modulation of the activity of the binding partner. Promotes inactivation of WDR24 component of the GATOR2 complex by binding to phosphorylated WDR24. Participates in the positive regulation of NMDA glutamate receptor activity by promoting the L-glutamate secretion through interaction with BEST1. Reduces keratinocyte intercellular adhesion, via interacting with PKP1 and sequestering it in the cytoplasm, thereby reducing its incorporation into desmosomes. Plays a role in mitochondrial protein catabolic process (also named MALM) that promotes the degradation of damaged proteins inside mitochondria. The chain is 14-3-3 protein gamma from Bos taurus (Bovine).